The sequence spans 887 residues: PAN2-PAN3 deadenylation complex subunit PAN3 (887 aa).

The C3H1-type zinc finger occupies Gly-43–Pro-71. Disordered regions lie at residues Ala-102 to Met-147, Gln-284 to Ser-307, and Ser-325 to Val-392. Residues Pro-122–Asp-138 are compositionally biased toward gly residues. Residues Met-147–Ser-498 form a necessary and sufficient for interaction with PABPC1 but not needed for interaction with PAN2 region. The PABPC-interacting motif-2 (PAM-2) signature appears at Gln-284–Ser-299. Residues Gly-298–Ser-307 show a composition bias toward polar residues. Ser-354 and Ser-361 each carry phosphoserine. The segment covering Thr-363–Val-392 has biased composition (polar residues). Residues Gln-463 to Gly-750 form a pseudokinase domain region. Residues Arg-521, Asp-570 to Thr-577, and Thr-644 to Lys-645 each bind ATP. Positions Ala-751–Thr-789 form a coiled coil. Positions Ile-790–Leu-887 are knob domain.

The protein belongs to the protein kinase superfamily. PAN3 family. In terms of assembly, homodimer. Forms a heterotrimer with a catalytic subunit PAN2 to form the poly(A)-nuclease (PAN) deadenylation complex. Interacts (via PAM-2 motif) with poly(A)-binding protein PABPC1 (via PABC domain), conferring substrate specificity of the enzyme complex. Interacts with the GW182 family proteins TNRC6A, TNRC6B and TNRC6. Interacts with YTHDF3. As to quaternary structure, interacts with PAN2. Interacts (via N-terminus) with PABPC1 at lower efficiency than isoform 3. Interacts with PAN2. Interacts (via N-terminus) with PABPC1 at higher efficiency than isoform 1.

The protein localises to the cytoplasm. It localises to the P-body. The protein resides in the nucleus. Functionally, regulatory subunit of the poly(A)-nuclease (PAN) deadenylation complex, one of two cytoplasmic mRNA deadenylases involved in general and miRNA-mediated mRNA turnover. PAN specifically shortens poly(A) tails of RNA and the activity is stimulated by poly(A)-binding protein (PABP). PAN deadenylation is followed by rapid degradation of the shortened mRNA tails by the CCR4-NOT complex. Deadenylated mRNAs are then degraded by two alternative mechanisms, namely exosome-mediated 3'-5' exonucleolytic degradation, or deadenylation-dependent mRNA decapping and subsequent 5'-3' exonucleolytic degradation by XRN1. PAN3 acts as a regulator for PAN activity, recruiting the catalytic subunit PAN2 to mRNA via its interaction with RNA and PABP, and to miRNA targets via its interaction with GW182 family proteins. Decreases PAN2-mediated deadenylation, possibly by preventing progression into the second CCR4-NOT mediated stage of biphasic deadenylation. Has a significant effect on mRNA stability, generally stabilizing a subset of the transcriptome. Stabilizes mRNAs degraded by the AU-rich element (ARE)-mediated mRNA decay pathway but promotes degradation of mRNAs by the microRNA-mediated pathway. Its activity influences mRNP remodeling, specifically reducing formation of a subset of P-bodies containing GW220, an isoform of TNRC6A. In terms of biological role, enhances PAN2 deadenylase activity and has an extensive effect on mRNA stability, generally enhancing mRNA decay across the transcriptome by multiple pathways, including the AU-rich element (ARE)-mediated pathway, microRNA-mediated pathway and the nonsense-mediated pathway (NMD). Its activity is required for efficient P-body formation. May be involved in regulating mRNAs of genes involved in cell cycle progression and cell proliferation. This is PAN2-PAN3 deadenylation complex subunit PAN3 from Homo sapiens (Human).